The chain runs to 144 residues: Large ribosomal subunit protein uL13 (144 aa).

Residues 125 to 144 form a disordered region; that stretch reads YRGPEHPHQAQKPQPLEVKA.

It belongs to the universal ribosomal protein uL13 family. As to quaternary structure, part of the 50S ribosomal subunit.

This protein is one of the early assembly proteins of the 50S ribosomal subunit, although it is not seen to bind rRNA by itself. It is important during the early stages of 50S assembly. In Aquifex aeolicus (strain VF5), this protein is Large ribosomal subunit protein uL13.